A 152-amino-acid chain; its full sequence is UPF0756 membrane protein Moth_1009 (152 aa).

Helical transmembrane passes span 5–25 (LIIL…VALA), 41–61 (IFPF…IAAI), 75–95 (LGHV…LITT), and 117–137 (LILG…GPFI).

It belongs to the UPF0756 family.

The protein resides in the cell membrane. The polypeptide is UPF0756 membrane protein Moth_1009 (Moorella thermoacetica (strain ATCC 39073 / JCM 9320)).